The sequence spans 91 residues: MKVFAAALAVILATATFCTPASASPYASDTTPCCFAYISRPLPRAHIQEYFYTSSKCSIPAVVFVTRKKRQVCANPEKKWVREYINTLEMS.

Residues 1–23 (MKVFAAALAVILATATFCTPASA) form the signal peptide. Cystine bridges form between Cys33-Cys57 and Cys34-Cys73.

The protein belongs to the intercrine beta (chemokine CC) family.

It localises to the secreted. Chemoattractant for blood monocytes, memory T-helper cells and eosinophils. Causes the release of histamine from basophils and activates eosinophils. May activate several chemokine receptors including CCR1, CCR3, CCR4 and CCR5. May also be an agonist of the G protein-coupled receptor GPR75. Together with GPR75, may play a role in neuron survival through activation of a downstream signaling pathway involving the PI3, Akt and MAP kinases. By activating GPR75 may also play a role in insulin secretion by islet cells. The chain is C-C motif chemokine 5 (CCL5) from Equus caballus (Horse).